The following is a 144-amino-acid chain: Nucleoside diphosphate kinase (144 aa).

Residues Lys11, Phe59, Arg87, Thr93, Arg104, and Asn114 each contribute to the ATP site. His117 serves as the catalytic Pros-phosphohistidine intermediate.

This sequence belongs to the NDK family. In terms of assembly, homotetramer. Requires Mg(2+) as cofactor.

The protein localises to the cytoplasm. The catalysed reaction is a 2'-deoxyribonucleoside 5'-diphosphate + ATP = a 2'-deoxyribonucleoside 5'-triphosphate + ADP. The enzyme catalyses a ribonucleoside 5'-diphosphate + ATP = a ribonucleoside 5'-triphosphate + ADP. Its function is as follows. Major role in the synthesis of nucleoside triphosphates other than ATP. The ATP gamma phosphate is transferred to the NDP beta phosphate via a ping-pong mechanism, using a phosphorylated active-site intermediate. In Psychromonas ingrahamii (strain DSM 17664 / CCUG 51855 / 37), this protein is Nucleoside diphosphate kinase.